We begin with the raw amino-acid sequence, 1197 residues long: Serine/threonine-protein kinase pakA (1197 aa).

Disordered stretches follow at residues 1-96, 328-383, 430-468, 485-543, and 562-819; these read MEEK…PIYR, QKED…KNID, REEEEENEDRVERELASRRRQEEDRIKREEEEEEEEQRN, EEEE…NLMG, and NSSG…RVGT. The segment covering 19–30 has biased composition (basic and acidic residues); sequence QKFEQFLDKTDK. The segment covering 34-49 has biased composition (polar residues); that stretch reads ATRNNYRGPVSSSTGI. Over residues 51–69 the composition is skewed to basic and acidic residues; the sequence is NDKEKKSHSYFKVREEGSN. Residues 70-79 are compositionally biased toward polar residues; that stretch reads KRPSSFSASN. Low complexity-rich tracts occupy residues 80–94 and 346–381; these read PITPSSPQSTHSSPI and NNNNNENNENDNNNNNNNNNNNNNNNNNNNNNNNKN. Positions 439-458 are enriched in basic and acidic residues; that stretch reads RVERELASRRRQEEDRIKRE. A compositionally biased stretch (low complexity) spans 494–523; that stretch reads SQLQSSQQQQKSSSTQRSSNTVTSTSSSST. Residues 524-536 are compositionally biased toward polar residues; it reads GGDSNPSTSQKPT. T585 is modified (phosphothreonine; by PKB). The span at 593-615 shows a compositional bias: polar residues; it reads SENTPLVSSIDNNGVNNKMSRSH. Low complexity-rich tracts occupy residues 636-653 and 671-707; these read NVNNSNNNNNNNNINNNH and SSSMSTPSISPSQAGNSATSTVPSSPISASTSMSSPT. Positions 718 to 727 are enriched in polar residues; the sequence is TTSTGSTRKG. Basic and acidic residues predominate over residues 728-737; the sequence is SISEREDKKK. Over residues 739-756 the composition is skewed to low complexity; that stretch reads SSSSTSSSSSSNGGLSSS. Residues 757-790 are compositionally biased toward basic and acidic residues; the sequence is GKDHKKDHSSEEKEKEKKSFFNKLFSKEKKDHHS. The CRIB domain occupies 817–830; sequence VGTPFNVKHDVHVN. Residues 911 to 1164 form the Protein kinase domain; that stretch reads YYNINKIGEG…SSSLLHHPFL (254 aa). Residues 917–925 and K940 each bind ATP; that span reads IGEGGAGEV. The active-site Proton acceptor is D1032.

This sequence belongs to the protein kinase superfamily. STE Ser/Thr protein kinase family. STE20 subfamily. Mg(2+) is required as a cofactor. Post-translationally, phosphorylation on Thr-585 results in cAMP-mediated activation and localization to the cytoskeleton. In terms of tissue distribution, colocalizes with myosin II to the cleavage furrow of cells undergoing cytokinesis and the posterior cortex of polarized cells.

It is found in the cytoplasm. The protein resides in the cytosol. The protein localises to the cytoskeleton. It catalyses the reaction L-seryl-[protein] + ATP = O-phospho-L-seryl-[protein] + ADP + H(+). It carries out the reaction L-threonyl-[protein] + ATP = O-phospho-L-threonyl-[protein] + ADP + H(+). Its function is as follows. Regulator of the myosin II component of the cytoskeleton: required for regulation of cytokinesis. Functions during chemotaxis, required for maintaining the direction of cell movement, suppressing lateral pseudopod extension, and proper retraction of the posterior of chemotaxing cells. This Dictyostelium discoideum (Social amoeba) protein is Serine/threonine-protein kinase pakA (pakA).